A 460-amino-acid chain; its full sequence is Diguanylate cyclase DosC (460 aa).

His-98 provides a ligand contact to heme. Residues 325–458 (TPLSVLIIDV…GRNRVELWKA (134 aa)) enclose the GGDEF domain. Mg(2+) is bound at residue Asp-333. The substrate site is built by Asn-341 and Asp-350. Asp-376 provides a ligand contact to Mg(2+). The Proton acceptor role is filled by Asp-376.

The cofactor is heme. It depends on Mg(2+) as a cofactor.

It catalyses the reaction 2 GTP = 3',3'-c-di-GMP + 2 diphosphate. The protein operates within purine metabolism; 3',5'-cyclic di-GMP biosynthesis. Functionally, globin-coupled heme-based oxygen sensor protein displaying diguanylate cyclase (DGC) activity in response to oxygen availability. Thus, catalyzes the synthesis of cyclic diguanylate (c-di-GMP) via the condensation of 2 GTP molecules. Cyclic-di-GMP is a second messenger which controls cell surface-associated traits in bacteria. The protein is Diguanylate cyclase DosC (dosC) of Shigella sonnei (strain Ss046).